The following is a 234-amino-acid chain: GTP:AMP phosphotransferase, mitochondrial (234 aa).

A GTP-binding site is contributed by 24–29 (GSGKGT). The NMP stretch occupies residues 45-74 (SSGDILRQEIKSESTLGREATTYIAQGKLL). AMP is bound by residues Ser-46, Arg-51, 72–74 (KLL), 103–106 (GFPR), and Gln-110. The interval 144–181 (NRYVHVPSGRVYNLQYNPPKVPGLDDITGEPLTKRLDD) is LID. Residues Arg-145 and 154 to 155 (VY) each bind GTP. 2 residues coordinate AMP: Arg-178 and Arg-189. Ser-218 contributes to the GTP binding site.

It belongs to the adenylate kinase family. AK3 subfamily. Monomer.

Its subcellular location is the mitochondrion matrix. It catalyses the reaction a ribonucleoside 5'-triphosphate + AMP = a ribonucleoside 5'-diphosphate + ADP. In terms of biological role, involved in maintaining the homeostasis of cellular nucleotides by catalyzing the interconversion of nucleoside phosphates. Has GTP:AMP phosphotransferase and ITP:AMP phosphotransferase activities. Does not accept ATP as phosphate donor. The polypeptide is GTP:AMP phosphotransferase, mitochondrial (Saccharomyces cerevisiae (Baker's yeast)).